A 1315-amino-acid chain; its full sequence is DNA-directed RNA polymerase subunit beta' (1315 aa).

Zn(2+) is bound by residues C60, C62, C75, and C78. Mg(2+) is bound by residues D535, D537, and D539. C890, C967, C974, and C977 together coordinate Zn(2+).

Belongs to the RNA polymerase beta' chain family. The RNAP catalytic core consists of 2 alpha, 1 beta, 1 beta' and 1 omega subunit. When a sigma factor is associated with the core the holoenzyme is formed, which can initiate transcription. It depends on Mg(2+) as a cofactor. Zn(2+) serves as cofactor.

It catalyses the reaction RNA(n) + a ribonucleoside 5'-triphosphate = RNA(n+1) + diphosphate. Functionally, DNA-dependent RNA polymerase catalyzes the transcription of DNA into RNA using the four ribonucleoside triphosphates as substrates. In Mycobacterium sp. (strain MCS), this protein is DNA-directed RNA polymerase subunit beta'.